Consider the following 277-residue polypeptide: Inositol monophosphatase 1 (277 aa).

4 residues coordinate Mg(2+): Glu-70, Asp-90, Ile-92, and Asp-93. Glu-70 is a binding site for substrate. Substrate contacts are provided by residues Ile-92–Thr-95, Gly-194–Ala-196, Glu-213, and Asp-220. Position 220 (Asp-220) interacts with Mg(2+).

It belongs to the inositol monophosphatase superfamily. As to quaternary structure, homodimer. Mg(2+) serves as cofactor. As to expression, ubiquitous.

It localises to the cytoplasm. The catalysed reaction is a myo-inositol phosphate + H2O = myo-inositol + phosphate. It catalyses the reaction 1D-myo-inositol 1-phosphate + H2O = myo-inositol + phosphate. The enzyme catalyses 1D-myo-inositol 2-phosphate + H2O = myo-inositol + phosphate. It carries out the reaction 1D-myo-inositol 3-phosphate + H2O = myo-inositol + phosphate. The catalysed reaction is 1D-myo-inositol 4-phosphate + H2O = myo-inositol + phosphate. It catalyses the reaction 1D-myo-inositol 5-phosphate + H2O = myo-inositol + phosphate. The enzyme catalyses 1D-myo-inositol 6-phosphate + H2O = myo-inositol + phosphate. It carries out the reaction scyllo-inositol 1-phosphate + H2O = scyllo-inositol + phosphate. The catalysed reaction is alpha-D-galactose 1-phosphate + H2O = D-galactose + phosphate. It catalyses the reaction alpha-D-glucose 1-phosphate + H2O = D-glucose + phosphate. The enzyme catalyses D-glucose 6-phosphate + H2O = D-glucose + phosphate. It carries out the reaction beta-D-fructose 1-phosphate + H2O = D-fructose + phosphate. The catalysed reaction is glycerol 2-phosphate + H2O = glycerol + phosphate. It catalyses the reaction adenosine 2'-phosphate + H2O = adenosine + phosphate. The protein operates within polyol metabolism; myo-inositol biosynthesis; myo-inositol from D-glucose 6-phosphate: step 2/2. Its activity is regulated as follows. Activity with myo-inositol monophosphate and D-galactose 1-phosphate is inhibited by Li(+), Ca(2+) and Mn(2+), but also by Mg(2+) at concentrations above 3 mM. Functionally, phosphatase involved in the dephosphorylation of myo-inositol monophosphate to generate myo-inositol. Is also able to dephosphorylate scyllo-inositol-phosphate, myo-inositol 1,4-diphosphate, scyllo-inositol-1,3-diphosphate and scyllo-inositol-1,4-diphosphate. Also dephosphorylates in vitro other sugar-phosphates including D-galactose-1-phosphate, glucose-1-phosphate, glucose-6-phosphate, fructose-1-phosphate, beta-glycerophosphate and 2'-AMP. Responsible for the provision of inositol required for synthesis of phosphatidylinositol and polyphosphoinositides, and involved in maintaining normal brain function. Has been implicated as the pharmacological target for lithium Li(+) action in brain. Is equally active with myo-inositol monophosphate and D-galactose 1-phosphate. In Rattus norvegicus (Rat), this protein is Inositol monophosphatase 1 (Impa1).